A 477-amino-acid chain; its full sequence is UDP-N-acetylmuramate--L-alanine ligase (477 aa).

Position 122–128 (122–128) interacts with ATP; that stretch reads GTHGKTT.

It belongs to the MurCDEF family.

Its subcellular location is the cytoplasm. The enzyme catalyses UDP-N-acetyl-alpha-D-muramate + L-alanine + ATP = UDP-N-acetyl-alpha-D-muramoyl-L-alanine + ADP + phosphate + H(+). It participates in cell wall biogenesis; peptidoglycan biosynthesis. Functionally, cell wall formation. In Xanthomonas axonopodis pv. citri (strain 306), this protein is UDP-N-acetylmuramate--L-alanine ligase.